A 191-amino-acid polypeptide reads, in one-letter code: dTTP/UTP pyrophosphatase (191 aa).

Asp68 functions as the Proton acceptor in the catalytic mechanism.

The protein belongs to the Maf family. YhdE subfamily. It depends on a divalent metal cation as a cofactor.

The protein localises to the cytoplasm. It catalyses the reaction dTTP + H2O = dTMP + diphosphate + H(+). The enzyme catalyses UTP + H2O = UMP + diphosphate + H(+). Its function is as follows. Nucleoside triphosphate pyrophosphatase that hydrolyzes dTTP and UTP. May have a dual role in cell division arrest and in preventing the incorporation of modified nucleotides into cellular nucleic acids. In Thermoanaerobacter pseudethanolicus (strain ATCC 33223 / 39E) (Clostridium thermohydrosulfuricum), this protein is dTTP/UTP pyrophosphatase.